The following is a 210-amino-acid chain: Protein GrpE (210 aa).

2 disordered regions span residues 1–40 and 191–210; these read MTDDTTKNGPDATAADAAADATAYVENETAQQEPAQPDPI and KGGPKPAEAETNSVFDEKDA. The span at 11 to 23 shows a compositional bias: low complexity; sequence DATAADAAADATA.

It belongs to the GrpE family. In terms of assembly, homodimer.

The protein resides in the cytoplasm. Functionally, participates actively in the response to hyperosmotic and heat shock by preventing the aggregation of stress-denatured proteins, in association with DnaK and GrpE. It is the nucleotide exchange factor for DnaK and may function as a thermosensor. Unfolded proteins bind initially to DnaJ; upon interaction with the DnaJ-bound protein, DnaK hydrolyzes its bound ATP, resulting in the formation of a stable complex. GrpE releases ADP from DnaK; ATP binding to DnaK triggers the release of the substrate protein, thus completing the reaction cycle. Several rounds of ATP-dependent interactions between DnaJ, DnaK and GrpE are required for fully efficient folding. The polypeptide is Protein GrpE (Rhizobium johnstonii (strain DSM 114642 / LMG 32736 / 3841) (Rhizobium leguminosarum bv. viciae)).